A 302-amino-acid polypeptide reads, in one-letter code: Syntaxin-17 (302 aa).

N-acetylserine is present on S2. Over 2 to 228 the chain is Cytoplasmic; it reads SEDEEKVKLR…KNLGKAAKYK (227 aa). Residue K41 is modified to N6-acetyllysine. A coiled-coil region spans residues 53–123; sequence EEHINAGRTV…EELKKQFNDE (71 aa). Y157 bears the Phosphotyrosine; by ABL1 mark. A t-SNARE coiled-coil homology domain is found at 162–224; that stretch reads IPRDQNAAES…EEGTKNLGKA (63 aa). The chain crosses the membrane as a helical span at residues 229-249; that stretch reads LAALPVAGALIGGVVGGPIGL. The necessary and sufficient for localization to autophagosome stretch occupies residues 229 to 275; sequence LAALPVAGALIGGVVGGPIGLLAGFKVAGIAAALGGGVLGFTGGKLI. Topologically, residues 250–254 are lumenal; the sequence is LAGFK. Residues 255 to 275 form a helical membrane-spanning segment; the sequence is VAGIAAALGGGVLGFTGGKLI. The Cytoplasmic portion of the chain corresponds to 276–302; that stretch reads QRRKQKMMEKLASSCPDLPSQTDKKCS. S289 bears the Phosphoserine mark. The short motif at 299–302 is the Endoplasmic reticulum retention signal element; the sequence is KKCS.

The protein belongs to the syntaxin family. As to quaternary structure, forms a SNARE complex composed of VAMP8, SNAP29 and STX17 involved in fusion of autophagosome with lysosome. May interact with VTI1B. Probably interacts with BET1, SCFD1 and SEC22B. Interacts with PTPN2 and ABL1; involved in STX17 phosphorylation. Interacts with COPB1. Interacts with TMED9 and TMED10; the interaction is direct. Interacts with VAMP7. Interacts with RUBCNL/PACER; promoting targeting of RUBCNL/PACER to autophagosome. Interacts with VAMP8, SNAP29, VPS39 and VPS41; these interactions are increased in the absence of TMEM39A. Interacts with IRGM; promoting STX17 recruitment to autophagosomes. Interacts with ATG8 proteins GABARAP and MAP1LC3B. Interacts with RNF115; this interaction enhances STX17 stability which in turn promotes autophagosome maturation. Interacts with RAB39A (GTP-bound); the interaction promotes autophagosome-lysosome membrane fusion driven by STX17-SNAP29-VAMP8. Interacts with RAB39B; the interaction may promote a different fonction in autophagy as compared with RAB39A. In terms of processing, phosphorylated at Tyr-157 probably by ABL1. Dephosphorylation by PTPN2; regulates exit from the endoplasmic reticulum.

It is found in the endoplasmic reticulum membrane. Its subcellular location is the smooth endoplasmic reticulum membrane. It localises to the endoplasmic reticulum-Golgi intermediate compartment membrane. The protein localises to the cytoplasmic vesicle. The protein resides in the autophagosome membrane. It is found in the COPII-coated vesicle membrane. Its subcellular location is the cytoplasm. It localises to the cytosol. The protein localises to the mitochondrion membrane. The protein resides in the autolysosome membrane. SNAREs, soluble N-ethylmaleimide-sensitive factor-attachment protein receptors, are essential proteins for fusion of cellular membranes. SNAREs localized on opposing membranes assemble to form a trans-SNARE complex, an extended, parallel four alpha-helical bundle that drives membrane fusion. STX17 is a SNARE of the autophagosome involved in autophagy through the direct control of autophagosome membrane fusion with the lysosome membrane. May also play a role in the early secretory pathway where it may maintain the architecture of the endoplasmic reticulum-Golgi intermediate compartment/ERGIC and Golgi and/or regulate transport between the endoplasmic reticulum, the ERGIC and the Golgi. The chain is Syntaxin-17 from Bos taurus (Bovine).